The primary structure comprises 329 residues: Porphobilinogen deaminase (329 aa).

Cys-250 is subject to S-(dipyrrolylmethanemethyl)cysteine.

Belongs to the HMBS family. Monomer. The cofactor is dipyrromethane.

The catalysed reaction is 4 porphobilinogen + H2O = hydroxymethylbilane + 4 NH4(+). Its pathway is porphyrin-containing compound metabolism; protoporphyrin-IX biosynthesis; coproporphyrinogen-III from 5-aminolevulinate: step 2/4. Tetrapolymerization of the monopyrrole PBG into the hydroxymethylbilane pre-uroporphyrinogen in several discrete steps. This is Porphobilinogen deaminase from Burkholderia thailandensis (strain ATCC 700388 / DSM 13276 / CCUG 48851 / CIP 106301 / E264).